A 116-amino-acid chain; its full sequence is Outer membrane protein assembly factor BamE (116 aa).

An N-terminal signal peptide occupies residues 1–22; that stretch reads MITMRCKMLTAAAVMLAMLTAG. C23 carries the N-palmitoyl cysteine lipid modification. A lipid anchor (S-diacylglycerol cysteine) is attached at C23.

It belongs to the BamE family. Part of the Bam complex, which is composed of the outer membrane protein BamA, and four lipoproteins BamB, BamC, BamD and BamE.

It is found in the cell outer membrane. Functionally, part of the outer membrane protein assembly complex, which is involved in assembly and insertion of beta-barrel proteins into the outer membrane. This is Outer membrane protein assembly factor BamE from Yersinia pestis.